Reading from the N-terminus, the 191-residue chain is Transcription factor HES-2 (191 aa).

The disordered stretch occupies residues 1–26 (MAPNVALADSMHNYQPKPGKRNQEAS). Positions 28–85 (LRKTLKPLMEKRRRARINESLNQLKTLILPLIGKDNSRYSKLEKADILEMTVRFLRDI) constitute a bHLH domain. The region spanning 97–130 (YKEGYRACVERLSAILGKSHVLTGEASNRLLEYL) is the Orange domain. Composition is skewed to polar residues over residues 159-173 (RTSQ…QPSS) and 182-191 (QLNSSIWRPW). The tract at residues 159–191 (RTSQFGSPLQNQPSSHRPAPCPPQLNSSIWRPW) is disordered. The WRPW motif signature appears at 188–191 (WRPW).

As to quaternary structure, transcription repression requires formation of a complex with a corepressor protein of the Groucho/TLE family. Homodimer, and heterodimer with the other bHLH proteins neurod1, neurod4/ath3, hes1/hairy1 and hes6r. Weakly interacts with the bHLH protein hey1/hrt1. In terms of tissue distribution, expressed in the animal half of the early cleavage stage embryo. During neurulation and organogenesis, the otic vesicles and retina are the main sites of expression; expression in otic placodes begins as early as stage 13.5, persisting in the otic vesicles at stage 30 and beyond. Also transiently expressed in the olfactory placodes. In addition, weakly expressed in primary neurons. Expression in the retina begins at stage 21, and is seen throughout the neural retina by stage 30. From stage 35 onwards, expression progressively declines in the central retina, while remaining high in the margins. At stage 41, expression becomes restricted to the ciliary marginal zone (CMZ) of the retina, the only region where retinogenesis is still occurring.

Its subcellular location is the nucleus. In terms of biological role, transcriptional repressor. Essential in the retina to govern glial versus neuronal differentiation. Promotes gliogenesis through the inhibition of neuronal differentiation by at least two distinct mechanisms; represses proneural gene transcription, and also physically interacts with proneural proteins, including neurod1. The polypeptide is Transcription factor HES-2 (hes2) (Xenopus laevis (African clawed frog)).